Here is a 940-residue protein sequence, read N- to C-terminus: MQQLQLHDVWEKLRPRDESIELGHYKKALQDVEKVLKKNPTIQCGRALKAWAFLRLGRDEESAALIKALEQETPTESTTLHVMTLCYKETDQLDKICQIFTSASKQLPGNEELLSQLFIAHMRVNDFKAQQTVAMQLYKLKPRNPFYFWAVTSVMLQALRGPDAKDQQKSSLLLSLAQRMVDKLIADNKIEASQEVQLYLQILQHQEKYQEMLTFLDGPVCTNLYPGAPHSIKIDLLKKLNKWADLNKLMKQLLTEDPDRWDYYQDYILSTIEMIKCKDETPETDHTVDMCHEFIAGIIESQPRKNRGPYLARLELARLMVKHKFDKEQQFGELTELLLDYFRMFGDKTCCANDLKLFLEYVEPAKRPGFAAQLMQECRINPVTLPSSKEHMQRHICSLQIARFCGAHAALSEEHLSALYTALSLHYEHGYNTFGQGLLPTDMGPSDPYALLAVNIMYDRAWKLQRSEPLVEALCLLNHLLSNSINNFHGKLLNLQLYHRLGLVEAAHRAYESLDIKHIQLDSLGYLHCSHLCNGGFPALAKQIFDQTLHFFINDTNSVEFLKTSYNFGSFSKLIEFLDFRDRLSNSLHFTLISVEALLLEMVCFSGTLAQNLAAYRLMRIKPQEDRIKWDEMSDNRDLTIFVHWDPTVEQLREECQKDSFSQEHELLQLRSGLLRLVSSFIELFTKGGDDEYQTAQDLSRHWEELFVTVRAKNRQPACERFLVNLLPSRLHSVLAMPYEAVFRDLASFLLALWKGEKHDQIRSGAERCVKHVNDLFELIAGSIKTYNSSGDLLWNRKKVHDTVNACVEIAALVLFVMTVCFDKYSQAPAPQPTRKTKKKDSEQNNHEPAVVLMTEKNRLQLVVDVLRALKTNLVDCEAVLSSWELPLLSDSLAGALEQMSLGAKSESAVRLKLMDTHLGEIKELKKLLKDKLKLINKSI.

The TPR repeat unit spans residues 77 to 110 (STTLHVMTLCYKETDQLDKICQIFTSASKQLPGN).

It belongs to the MDM20/NAA25 family. In terms of assembly, component of the N-terminal acetyltransferase B (NatB) complex.

The protein resides in the lysosome. Its function is as follows. Non-catalytic subunit of the NatB complex which catalyzes acetylation of the N-terminal methionine residues of proteins beginning with Met-Asp or Met-Glu. Has 2 roles in the larval immune response: required both for the phagocytic degradation of internalized bacteria and for the induction of Defensin in the fat body. Within the phagocytic blood cells, has a role in detection of infection and activation of the humoral immune response. This chain is Phagocyte signaling-impaired protein, found in Aedes aegypti (Yellowfever mosquito).